The primary structure comprises 210 residues: Uracil phosphoribosyltransferase (210 aa).

5-phospho-alpha-D-ribose 1-diphosphate is bound by residues Arg78, Arg103, and Asp130–Ser138. Uracil-binding positions include Ile193 and Gly198 to Ala200. Asp199 lines the 5-phospho-alpha-D-ribose 1-diphosphate pocket.

This sequence belongs to the UPRTase family. Mg(2+) serves as cofactor.

The enzyme catalyses UMP + diphosphate = 5-phospho-alpha-D-ribose 1-diphosphate + uracil. The protein operates within pyrimidine metabolism; UMP biosynthesis via salvage pathway; UMP from uracil: step 1/1. Its activity is regulated as follows. Allosterically activated by GTP. Functionally, catalyzes the conversion of uracil and 5-phospho-alpha-D-ribose 1-diphosphate (PRPP) to UMP and diphosphate. This chain is Uracil phosphoribosyltransferase, found in Chromobacterium violaceum (strain ATCC 12472 / DSM 30191 / JCM 1249 / CCUG 213 / NBRC 12614 / NCIMB 9131 / NCTC 9757 / MK).